Here is a 334-residue protein sequence, read N- to C-terminus: Oligopeptide transport ATP-binding protein OppF (334 aa).

Residues 12 to 265 (LEIADLKVHF…PLHPYTKALM (254 aa)) enclose the ABC transporter domain. Residue 57 to 64 (GESGCGKS) coordinates ATP.

The protein belongs to the ABC transporter superfamily. The complex is composed of two ATP-binding proteins (OppD and OppF), two transmembrane proteins (OppB and OppC) and a solute-binding protein (OppA).

Its subcellular location is the cell inner membrane. It carries out the reaction a [peptide](out) + ATP + H2O = a [peptide](in) + ADP + phosphate + H(+). It catalyses the reaction L-alanyl-gamma-D-glutamyl-meso-2,6-diaminopimelate(out) + ATP + H2O = L-alanyl-gamma-D-glutamyl-meso-2,6-diaminopimelate(in) + ADP + phosphate + H(+). Part of the ABC transporter complex OppABCDF involved in the uptake of oligopeptides, including the cell wall murein tripeptide L-alanyl-gamma-D-glutamyl-meso-diaminopimelate. Probably responsible for energy coupling to the transport system. Plays an important nutritional role and is involved in the recycling of cell wall peptides. The polypeptide is Oligopeptide transport ATP-binding protein OppF (Salmonella typhimurium (strain LT2 / SGSC1412 / ATCC 700720)).